A 421-amino-acid chain; its full sequence is Enolase (421 aa).

Glutamine 165 serves as a coordination point for (2R)-2-phosphoglycerate. Residue glutamate 207 is the Proton donor of the active site. Mg(2+) is bound by residues aspartate 244, glutamate 285, and aspartate 312. 4 residues coordinate (2R)-2-phosphoglycerate: lysine 337, arginine 366, serine 367, and lysine 388. The Proton acceptor role is filled by lysine 337.

It belongs to the enolase family. It depends on Mg(2+) as a cofactor.

Its subcellular location is the cytoplasm. The protein localises to the secreted. It localises to the cell surface. It carries out the reaction (2R)-2-phosphoglycerate = phosphoenolpyruvate + H2O. It participates in carbohydrate degradation; glycolysis; pyruvate from D-glyceraldehyde 3-phosphate: step 4/5. Its function is as follows. Catalyzes the reversible conversion of 2-phosphoglycerate (2-PG) into phosphoenolpyruvate (PEP). It is essential for the degradation of carbohydrates via glycolysis. This chain is Enolase, found in Ehrlichia ruminantium (strain Welgevonden).